We begin with the raw amino-acid sequence, 406 residues long: DNA primase DnaG (406 aa).

Residues 167–253 (DAVVIVEGRA…CVEDLSRRTV (87 aa)) form the Toprim domain. 3 residues coordinate Mg(2+): Glu173, Asp215, and Asp217. The disordered stretch occupies residues 259 to 309 (NKTPASAAAPIATTQSETAATDGSATPAPTPEPAPDTAPSPDSDGDDTEAA). A compositionally biased stretch (low complexity) spans 261–272 (TPASAAAPIATT). A compositionally biased stretch (pro residues) spans 286-296 (APTPEPAPDTA).

The protein belongs to the archaeal DnaG primase family. In terms of assembly, forms a ternary complex with MCM helicase and DNA. Mg(2+) serves as cofactor.

It catalyses the reaction ssDNA + n NTP = ssDNA/pppN(pN)n-1 hybrid + (n-1) diphosphate.. In terms of biological role, RNA polymerase that catalyzes the synthesis of short RNA molecules used as primers for DNA polymerase during DNA replication. This chain is DNA primase DnaG, found in Halobacterium salinarum (strain ATCC 29341 / DSM 671 / R1).